The following is a 312-amino-acid chain: MANDNGIKHFIDLSTVPATELRAILEDAKARKARLKAGEVERPYAGKVLAMIFEKLSTRTRVSFDVGMRQLGGETIMLTGSEMQLGRSETIADTAKVLSRYVDAIMIRTTAHERMLELAEYATVPVINALTDDTHPCQIMADVLTYEEHRGPIKGKTFAWMGDGNNVLHSLVEAAARFDFNVNIATPKGSEPKSQYIDWARANGAGIMSTTDPEKAASGADCIVTDTWVSMGQEDHARGHNVFIPYQVNANLMAKADPKALFMHCLPAHRGEEVTDEVIDGPQSVVFDEAENRLHAQKAILAWCLQDRGLGA.

Residues 57–60, Gln-84, Arg-108, and 135–138 contribute to the carbamoyl phosphate site; these read STRT and HPCQ. Residues Asn-166, Asp-226, and 230–231 contribute to the L-ornithine site; that span reads SM. Carbamoyl phosphate contacts are provided by residues 265–266 and Arg-293; that span reads CL.

Belongs to the aspartate/ornithine carbamoyltransferase superfamily. OTCase family.

The protein localises to the cytoplasm. The enzyme catalyses carbamoyl phosphate + L-ornithine = L-citrulline + phosphate + H(+). Its pathway is amino-acid degradation; L-arginine degradation via ADI pathway; carbamoyl phosphate from L-arginine: step 2/2. Reversibly catalyzes the transfer of the carbamoyl group from carbamoyl phosphate (CP) to the N(epsilon) atom of ornithine (ORN) to produce L-citrulline. The sequence is that of Ornithine carbamoyltransferase from Brucella abortus (strain 2308).